Reading from the N-terminus, the 134-residue chain is Small ribosomal subunit protein uS8c (134 aa).

Belongs to the universal ribosomal protein uS8 family. In terms of assembly, part of the 30S ribosomal subunit.

It is found in the plastid. The protein localises to the chloroplast. In terms of biological role, one of the primary rRNA binding proteins, it binds directly to 16S rRNA central domain where it helps coordinate assembly of the platform of the 30S subunit. This Bigelowiella natans (Pedinomonas minutissima) protein is Small ribosomal subunit protein uS8c (rps8).